A 117-amino-acid polypeptide reads, in one-letter code: Colipase (117 aa).

The first 22 residues, 1-22, serve as a signal peptide directing secretion; that stretch reads MNIFNILLPIVVLLLVFGLTAA. 5 disulfides stabilise this stretch: Cys-39–Cys-50, Cys-45–Cys-61, Cys-49–Cys-83, Cys-71–Cys-91, and Cys-85–Cys-109.

Belongs to the colipase family. In terms of assembly, forms a 1:1 stoichiometric complex with pancreatic lipase.

It localises to the secreted. Its function is as follows. Colipase is a cofactor of pancreatic lipase. It allows the lipase to anchor itself to the lipid-water interface. Without colipase the enzyme is washed off by bile salts, which have an inhibitory effect on the lipase. This chain is Colipase (clps), found in Xenopus tropicalis (Western clawed frog).